The sequence spans 158 residues: Large ribosomal subunit protein uL30 (158 aa).

The protein belongs to the universal ribosomal protein uL30 family. In terms of assembly, part of the 50S ribosomal subunit.

The polypeptide is Large ribosomal subunit protein uL30 (Saccharolobus islandicus (strain Y.G.57.14 / Yellowstone #1) (Sulfolobus islandicus)).